We begin with the raw amino-acid sequence, 1481 residues long: Cystic fibrosis transmembrane conductance regulator (1481 aa).

The Cytoplasmic portion of the chain corresponds to 1-77 (MQKSPLVKAS…KLINALRRCF (77 aa)). The chain crosses the membrane as a helical span at residues 78 to 98 (LWRFIFYGILLYLGEVTKAVQ). Residues 81 to 365 (FIFYGILLYL…GAVQTWYDSL (285 aa)) form the ABC transmembrane type-1 1 domain. Residues 99–122 (PLLLGRIIASYDPDNKEERSIAIY) are Extracellular-facing. A helical membrane pass occupies residues 123–146 (LAIGLCLLFIVRTLLLHPAIFGLQ). Residues 147-195 (HIGMQMRIAMFSLIYKKTLKLSSRVLDKISIGQLVSLLSNNLNKFDEGL) are Cytoplasmic-facing. A helical transmembrane segment spans residues 196-216 (ALAHFVWIAPLQVTLLMGLLW). The Extracellular portion of the chain corresponds to 217-222 (DLLQAS). The chain crosses the membrane as a helical span at residues 223–243 (AFCGLAVLIVLALFQAWLGKM). At 244–298 (MMKYRDQRAGKINERLVITSEMIENIQSVKAYCWEEAMEKMIENLRQTELKLTRK) the chain is on the cytoplasmic side. A helical transmembrane segment spans residues 299-319 (AAYMRYFNSAAFFFSGFFVVF). Over 320-339 (LSVLPYAFLQGIILRKIFTT) the chain is Extracellular. A helical transmembrane segment spans residues 340–358 (ISFCIVLRMAITRQFPGAV). The Cytoplasmic portion of the chain corresponds to 359 to 859 (QTWYDSLGAI…YLRYITVHKS (501 aa)). ATP-binding positions include Trp401, Ser435, 459–466 (GSTGAGKT), and Gln494. One can recognise an ABC transporter 1 domain in the interval 424 to 647 (NGDNKLFFSN…RPDFSSKLMG (224 aa)). A lipid anchor (S-palmitoyl cysteine) is attached at Cys525. Ser550 carries the phosphoserine modification. The disordered R region stretch occupies residues 655 to 832 (SAERRNSILT…EEINEEDLKE (178 aa)). Residues Ser661 and Ser671 each carry the phosphoserine; by PKA modification. Phosphoserine; by PKC is present on Ser687. A Glycyl lysine isopeptide (Lys-Gly) (interchain with G-Cter in ubiquitin) cross-link involves residue Lys689. 2 positions are modified to phosphoserine; by PKA: Ser701 and Ser713. Residue Thr718 is modified to Phosphothreonine. Phosphoserine; by PKA is present on residues Ser738, Ser769, Ser796, and Ser814. The helical transmembrane segment at 860–880 (LILVLIWCLIIFLAEVAASLV) threads the bilayer. The region spanning 860–1156 (LILVLIWCLI…AVNSSIDVDS (297 aa)) is the ABC transmembrane type-1 2 domain. Over 881–919 (VLWLLKNNTPQQEMNSTQSGNRSYPVIITNTSFYYIFYI) the chain is Extracellular. Asn895 and Asn901 each carry an N-linked (GlcNAc...) asparagine glycan. Residues 920–940 (YVGVADTLLALGLFRGLPLVH) traverse the membrane as a discontinuously helical segment. The Cytoplasmic segment spans residues 941 to 991 (TLITVSKILHHKMLRSVLQAPMSTLNALKAGGILNRFSKDIAILDDLLPLT). A helical membrane pass occupies residues 992 to 1012 (IFDFIQLLLIVIGAIAVVSVL). Residues 1013–1014 (QP) are Extracellular-facing. The helical transmembrane segment at 1015 to 1035 (YIFLATVPVIAAFIMLRAYFL) threads the bilayer. The Cytoplasmic segment spans residues 1036–1096 (HTSQQLKQLE…TANWFLYLST (61 aa)). The helical transmembrane segment at 1097–1117 (LRWFQMRIEMIFVIFFIAVTF) threads the bilayer. Residues 1118–1131 (ISILTTGEGQGSVG) lie on the Extracellular side of the membrane. The helical transmembrane segment at 1132-1152 (IILTLAMNIMSTLQWAVNSSI) threads the bilayer. Residues 1153 to 1481 (DVDSLMRSVS…TEEEVQETRL (329 aa)) are Cytoplasmic-facing. An ABC transporter 2 domain is found at 1211-1444 (MIVKDLTAKY…KSLFRQAISS (234 aa)). Residues Tyr1220 and 1245–1252 (GRTGSGKS) contribute to the ATP site. Residues 1387–1481 (RTIKQAFADC…TEEEVQETRL (95 aa)) form an interaction with GORASP2 region. Cys1396 carries S-palmitoyl cysteine lipidation. Phosphoserine is present on residues Ser1445 and Ser1457. Over residues 1453–1462 (HRNSSKHKSR) the composition is skewed to basic residues. Residues 1453 to 1481 (HRNSSKHKSRSQITALKEETEEEVQETRL) are disordered. Acidic residues predominate over residues 1471–1481 (ETEEEVQETRL). Residues 1479 to 1481 (TRL) carry the PDZ-binding motif.

It belongs to the ABC transporter superfamily. ABCC family. CFTR transporter (TC 3.A.1.202) subfamily. Monomer; does not require oligomerization for channel activity. May form oligomers in the membrane. Interacts with SLC26A3, SLC26A6 and NHERF1. Interacts with SHANK2. Interacts with MYO6. Interacts (via C-terminus) with GOPC (via PDZ domain); this promotes CFTR internalization and thereby decreases channel activity. Interacts with SLC4A7 through NHERF1. Found in a complex with MYO5B and RAB11A. Interacts with ANO1. Interacts with SLC26A8. Interacts with AHCYL1; the interaction increases CFTR activity. Interacts with CSE1L. The core-glycosylated form interacts with GORASP2 (via PDZ GRASP-type 1 domain) in respone to ER stress. Interacts with MARCHF2; the interaction leads to CFTR ubiqtuitination and degradation. Interacts with ADGRG2. Post-translationally, N-glycosylated. In terms of processing, phosphorylated; cAMP treatment promotes phosphorylation and activates the channel. Dephosphorylation decreases the ATPase activity (in vitro). Phosphorylation at PKA sites activates the channel. Phosphorylation at PKC sites enhances the response to phosphorylation by PKA. Phosphorylated by AMPK; this inhibits channel activity. Ubiquitinated, leading to its degradation in the lysosome. Deubiquitination by USP10 in early endosomes enhances its endocytic recycling to the cell membrane. Ubiquitinated by RNF185 during ER stress. Ubiquitinated by MARCHF2.

Its subcellular location is the apical cell membrane. The protein localises to the early endosome membrane. It localises to the cell membrane. The protein resides in the recycling endosome membrane. It is found in the endoplasmic reticulum membrane. Its subcellular location is the nucleus. It carries out the reaction ATP + H2O + closed Cl(-) channel = ADP + phosphate + open Cl(-) channel.. The catalysed reaction is chloride(in) = chloride(out). It catalyses the reaction hydrogencarbonate(in) = hydrogencarbonate(out). The enzyme catalyses ATP + H2O = ADP + phosphate + H(+). Its function is as follows. Epithelial ion channel that plays an important role in the regulation of epithelial ion and water transport and fluid homeostasis. Mediates the transport of chloride ions across the cell membrane. Possesses an intrinsic ATPase activity and utilizes ATP to gate its channel; the passive flow of anions through the channel is gated by cycles of ATP binding and hydrolysis by the ATP-binding domains. The ion channel is also permeable to HCO(3)(-); selectivity depends on the extracellular chloride concentration. Exerts its function also by modulating the activity of other ion channels and transporters. Contributes to the regulation of the pH and the ion content of the epithelial fluid layer. Modulates the activity of the epithelial sodium channel (ENaC) complex, in part by regulating the cell surface expression of the ENaC complex. May regulate bicarbonate secretion and salvage in epithelial cells by regulating the transporter SLC4A7. Can inhibit the chloride channel activity of ANO1. Plays a role in the chloride and bicarbonate homeostasis during sperm epididymal maturation and capacitation. This chain is Cystic fibrosis transmembrane conductance regulator, found in Cavia porcellus (Guinea pig).